Consider the following 236-residue polypeptide: 7-cyano-7-deazaguanine synthase (236 aa).

7–17 lines the ATP pocket; that stretch reads CSGGLDSVSLA. Positions 185, 193, 196, and 199 each coordinate Zn(2+).

It belongs to the QueC family. Requires Zn(2+) as cofactor.

The catalysed reaction is 7-carboxy-7-deazaguanine + NH4(+) + ATP = 7-cyano-7-deazaguanine + ADP + phosphate + H2O + H(+). The protein operates within purine metabolism; 7-cyano-7-deazaguanine biosynthesis. Catalyzes the ATP-dependent conversion of 7-carboxy-7-deazaguanine (CDG) to 7-cyano-7-deazaguanine (preQ(0)). This chain is 7-cyano-7-deazaguanine synthase, found in Rhizobium etli (strain ATCC 51251 / DSM 11541 / JCM 21823 / NBRC 15573 / CFN 42).